A 298-amino-acid chain; its full sequence is Pantothenate synthetase (298 aa).

An ATP-binding site is contributed by 30–37; the sequence is MGNLHEGH. Residue H37 is the Proton donor of the active site. Residue Q61 participates in (R)-pantoate binding. Q61 contributes to the beta-alanine binding site. 149–152 lines the ATP pocket; that stretch reads GEKD. Q155 contacts (R)-pantoate. ATP is bound by residues V178 and 186–189; that span reads MSSR.

This sequence belongs to the pantothenate synthetase family. Homodimer.

The protein localises to the cytoplasm. It catalyses the reaction (R)-pantoate + beta-alanine + ATP = (R)-pantothenate + AMP + diphosphate + H(+). It participates in cofactor biosynthesis; (R)-pantothenate biosynthesis; (R)-pantothenate from (R)-pantoate and beta-alanine: step 1/1. Catalyzes the condensation of pantoate with beta-alanine in an ATP-dependent reaction via a pantoyl-adenylate intermediate. The protein is Pantothenate synthetase of Aliivibrio salmonicida (strain LFI1238) (Vibrio salmonicida (strain LFI1238)).